Consider the following 111-residue polypeptide: Probable 4-amino-4-deoxy-L-arabinose-phosphoundecaprenol flippase subunit ArnE (111 aa).

3 helical membrane passes run I36–L56, V61–A81, and P88–G108. The EamA domain occupies L40–S109.

It belongs to the ArnE family. As to quaternary structure, heterodimer of ArnE and ArnF.

The protein localises to the cell inner membrane. It functions in the pathway bacterial outer membrane biogenesis; lipopolysaccharide biosynthesis. In terms of biological role, translocates 4-amino-4-deoxy-L-arabinose-phosphoundecaprenol (alpha-L-Ara4N-phosphoundecaprenol) from the cytoplasmic to the periplasmic side of the inner membrane. The sequence is that of Probable 4-amino-4-deoxy-L-arabinose-phosphoundecaprenol flippase subunit ArnE from Shigella flexneri.